Consider the following 363-residue polypeptide: uncharacterized protein (363 aa).

S-adenosyl-L-methionine-binding residues include glutamine 198, tyrosine 225, glutamate 246, and aspartate 291. The active-site Nucleophile is cysteine 318.

The protein belongs to the class I-like SAM-binding methyltransferase superfamily. RNA M5U methyltransferase family.

This is an uncharacterized protein from Mycoplasma mobile (strain ATCC 43663 / 163K / NCTC 11711) (Mesomycoplasma mobile).